Consider the following 396-residue polypeptide: S-adenosylmethionine synthase (396 aa).

An ATP-binding site is contributed by histidine 16. Aspartate 18 is a binding site for Mg(2+). A K(+)-binding site is contributed by glutamate 44. 2 residues coordinate L-methionine: glutamate 57 and glutamine 100. Positions 100 to 110 (QSPDIAQGVDR) are flexible loop. ATP is bound by residues 167-169 (DAK), 233-234 (RF), aspartate 242, 248-249 (RK), alanine 265, and lysine 269. An L-methionine-binding site is contributed by aspartate 242. Lysine 273 contacts L-methionine.

The protein belongs to the AdoMet synthase family. In terms of assembly, homotetramer; dimer of dimers. It depends on Mg(2+) as a cofactor. The cofactor is K(+).

It localises to the cytoplasm. It catalyses the reaction L-methionine + ATP + H2O = S-adenosyl-L-methionine + phosphate + diphosphate. Its pathway is amino-acid biosynthesis; S-adenosyl-L-methionine biosynthesis; S-adenosyl-L-methionine from L-methionine: step 1/1. Its function is as follows. Catalyzes the formation of S-adenosylmethionine (AdoMet) from methionine and ATP. The overall synthetic reaction is composed of two sequential steps, AdoMet formation and the subsequent tripolyphosphate hydrolysis which occurs prior to release of AdoMet from the enzyme. This Paraburkholderia phytofirmans (strain DSM 17436 / LMG 22146 / PsJN) (Burkholderia phytofirmans) protein is S-adenosylmethionine synthase.